Reading from the N-terminus, the 102-residue chain is Small ribosomal subunit protein uS10 (102 aa).

The protein belongs to the universal ribosomal protein uS10 family. As to quaternary structure, part of the 30S ribosomal subunit.

Involved in the binding of tRNA to the ribosomes. This chain is Small ribosomal subunit protein uS10, found in Rhodopseudomonas palustris (strain BisB18).